We begin with the raw amino-acid sequence, 329 residues long: tRNA N6-adenosine threonylcarbamoyltransferase (329 aa).

Residues His-110 and His-114 each contribute to the Fe cation site. Substrate is bound by residues 132–136, Asp-165, Gly-178, and Asn-271; that span reads VISGG. Position 299 (Asp-299) interacts with Fe cation.

This sequence belongs to the KAE1 / TsaD family. Fe(2+) serves as cofactor.

The protein resides in the cytoplasm. It catalyses the reaction L-threonylcarbamoyladenylate + adenosine(37) in tRNA = N(6)-L-threonylcarbamoyladenosine(37) in tRNA + AMP + H(+). Required for the formation of a threonylcarbamoyl group on adenosine at position 37 (t(6)A37) in tRNAs that read codons beginning with adenine. Is involved in the transfer of the threonylcarbamoyl moiety of threonylcarbamoyl-AMP (TC-AMP) to the N6 group of A37, together with TsaE and TsaB. TsaD likely plays a direct catalytic role in this reaction. In Neorickettsia sennetsu (strain ATCC VR-367 / Miyayama) (Ehrlichia sennetsu), this protein is tRNA N6-adenosine threonylcarbamoyltransferase.